Reading from the N-terminus, the 262-residue chain is Hydroxyethylthiazole kinase (262 aa).

A substrate-binding site is contributed by methionine 40. 2 residues coordinate ATP: lysine 116 and threonine 162. Glycine 189 is a binding site for substrate.

It belongs to the Thz kinase family. The cofactor is Mg(2+).

The enzyme catalyses 5-(2-hydroxyethyl)-4-methylthiazole + ATP = 4-methyl-5-(2-phosphooxyethyl)-thiazole + ADP + H(+). Its pathway is cofactor biosynthesis; thiamine diphosphate biosynthesis; 4-methyl-5-(2-phosphoethyl)-thiazole from 5-(2-hydroxyethyl)-4-methylthiazole: step 1/1. Its function is as follows. Catalyzes the phosphorylation of the hydroxyl group of 4-methyl-5-beta-hydroxyethylthiazole (THZ). The chain is Hydroxyethylthiazole kinase from Clostridioides difficile (strain 630) (Peptoclostridium difficile).